Here is a 116-residue protein sequence, read N- to C-terminus: Phosphoribosyl-ATP pyrophosphatase (116 aa).

The protein belongs to the PRA-PH family.

The protein resides in the cytoplasm. It catalyses the reaction 1-(5-phospho-beta-D-ribosyl)-ATP + H2O = 1-(5-phospho-beta-D-ribosyl)-5'-AMP + diphosphate + H(+). It functions in the pathway amino-acid biosynthesis; L-histidine biosynthesis; L-histidine from 5-phospho-alpha-D-ribose 1-diphosphate: step 2/9. In Bordetella avium (strain 197N), this protein is Phosphoribosyl-ATP pyrophosphatase.